The primary structure comprises 106 residues: Thioredoxin (106 aa).

Lysine 3 is subject to N6-acetyllysine. The 104-residue stretch at 3–106 folds into the Thioredoxin domain; it reads KQIESKTAFQ…KLEATINELV (104 aa). Residue lysine 8 is modified to N6-succinyllysine. Residues cysteine 32 and cysteine 35 each act as nucleophile in the active site. Cysteine 32 and cysteine 35 are joined by a disulfide. At lysine 39 the chain carries N6-acetyllysine. S-nitrosocysteine occurs at positions 62 and 69. Cysteine 73 is subject to S-nitrosocysteine; alternate. N6-acetyllysine; alternate is present on lysine 95. N6-succinyllysine; alternate is present on lysine 95.

Belongs to the thioredoxin family. In terms of assembly, homodimer; disulfide-linked. Interacts with TXNIP through the redox-active site. Interacts with MAP3K5 and CASP3. Interacts with APEX1; the interaction stimulates the FOS/JUN AP-1 DNA-binding activity in a redox-dependent manner. In terms of processing, in the fully reduced protein, both Cys-69 and Cys-73 are nitrosylated in response to nitric oxide (NO). When two disulfide bonds are present in the protein, only Cys-73 is nitrosylated. Cys-73 can serve as donor for nitrosylation of target proteins.

The protein resides in the nucleus. Its subcellular location is the cytoplasm. It localises to the secreted. Participates in various redox reactions through the reversible oxidation of its active center dithiol to a disulfide and catalyzes dithiol-disulfide exchange reactions. Plays a role in the reversible S-nitrosylation of cysteine residues in target proteins, and thereby contributes to the response to intracellular nitric oxide. Nitrosylates the active site Cys of CASP3 in response to nitric oxide (NO), and thereby inhibits caspase-3 activity. Induces the FOS/JUN AP-1 DNA binding activity in ionizing radiation (IR) cells through its oxidation/reduction status and stimulates AP-1 transcriptional activity. This chain is Thioredoxin (TXN), found in Pongo abelii (Sumatran orangutan).